A 178-amino-acid chain; its full sequence is Fatty-acid and retinol-binding protein 1 (178 aa).

Residues 1-16 (MYHQLILMALIGVIMA) form the signal peptide. Residues N44 and N75 are each glycosylated (N-linked (GlcNAc...) asparagine). Coiled-coil stretches lie at residues 67–89 (DAALEALKNKSDKLYQKAVELRN) and 123–154 (KLDMEKIKQAARDIIAKYEALNEETKEELKAT). N157 carries an N-linked (GlcNAc...) asparagine glycan.

The protein belongs to the fatty-acid and retinol-binding protein (FARBP) family. Post-translationally, N-glycosylated.

It localises to the secreted. In terms of biological role, binds retinol and different fatty acids. This Onchocerca gutturosa protein is Fatty-acid and retinol-binding protein 1.